We begin with the raw amino-acid sequence, 212 residues long: ATP-dependent dethiobiotin synthetase BioD (212 aa).

Gly-13–Val-18 contacts ATP. Thr-17 contributes to the Mg(2+) binding site. Residue Lys-33 is part of the active site. Glu-100 serves as a coordination point for Mg(2+). ATP is bound by residues Glu-100–Gly-103 and Pro-184–Val-186.

It belongs to the dethiobiotin synthetase family. Homodimer. Mg(2+) serves as cofactor.

It localises to the cytoplasm. It carries out the reaction (7R,8S)-7,8-diammoniononanoate + CO2 + ATP = (4R,5S)-dethiobiotin + ADP + phosphate + 3 H(+). Its pathway is cofactor biosynthesis; biotin biosynthesis; biotin from 7,8-diaminononanoate: step 1/2. Its function is as follows. Catalyzes a mechanistically unusual reaction, the ATP-dependent insertion of CO2 between the N7 and N8 nitrogen atoms of 7,8-diaminopelargonic acid (DAPA, also called 7,8-diammoniononanoate) to form a ureido ring. The protein is ATP-dependent dethiobiotin synthetase BioD of Nitrobacter hamburgensis (strain DSM 10229 / NCIMB 13809 / X14).